Reading from the N-terminus, the 582-residue chain is MVEGGIAKADKTEFTECWRTTWKTPYIMRLALSAGIGGLLFGYDTGVISGALLFIKEDFDEVDKKTWLQSTIVSMAVAGAIVGAAVGGWINDKFGRRMSILIADVLFLIGAIVMAFAPAPWVIIVGRIFVGFGVGMASMTSPLYISEASPARIRGALVSTNGLLITGGQFFSYLINLAFVHTPGTWRWMLGVAGVPAIVQFVLMLSLPESPRWLYRKDRIAESRAILERIYPADEVEAEMEALKLSVEAEKADEAIIGDSFSAKLKGAFGNPVVRRGLAAGITVQVAQQFVGINTVMYYSPSIVQFAGYASNKTAMALSLITSGLNALGSIVSMMFVDRYGRRKLMIISMFGIIACLIILATVFSQAAIHAPKIDAFESRTFAPNATCSAYAPLAAENAPPSRWNCMKCLRSECGFCASGVQPYAPGACVVLSDDMKATCSSRGRTFFKDGCPSKFGFLAIVFLGLYIVVYAPGMGTVPWIVNSEIYPLRYRGLGGGIAAVSNWVSNLIVSESFLSLTHALGSSGTFLLFAGFSTIGLFFIWLLVPETKGLQFEEVEKLLEVGFKPSLLRRREKKGKEVDAA.

The next 12 membrane-spanning stretches (helical) occupy residues 35–55 (GIGGLLFGYDTGVISGALLFI), 70–90 (STIVSMAVAGAIVGAAVGGWI), 105–125 (VLFLIGAIVMAFAPAPWVIIV), 128–148 (IFVGFGVGMASMTSPLYISEA), 162–182 (GLLITGGQFFSYLINLAFVHT), 188–208 (WMLGVAGVPAIVQFVLMLSLP), 290–310 (FVGINTVMYYSPSIVQFAGYA), 317–337 (ALSLITSGLNALGSIVSMMFV), 345–365 (LMIISMFGIIACLIILATVFS), 456–476 (FGFLAIVFLGLYIVVYAPGMG), 494–514 (LGGGIAAVSNWVSNLIVSESF), and 525–545 (GTFLLFAGFSTIGLFFIWLLV).

The protein belongs to the major facilitator superfamily. Sugar transporter (TC 2.A.1.1) family. In terms of tissue distribution, highly expressed in pollen and phloem companion cells.

It localises to the cell membrane. In terms of biological role, plasma membrane inositol-proton symporter. Mediates high-affinity myoinositol-proton symport across the plasma membrane. Active with myoinositol, scylloinositol and D-chiroinositol. Low activity with mucoinositol and alloinositol. The polypeptide is Inositol transporter 4 (INT4) (Arabidopsis thaliana (Mouse-ear cress)).